A 355-amino-acid chain; its full sequence is Probable poly-beta-1,6-N-acetyl-D-glucosamine export protein (355 aa).

10 consecutive transmembrane segments (helical) span residues 13–30, 45–67, 74–96, 116–138, 145–167, 187–204, 211–233, 243–262, 269–291, and 306–328; these read AFIC…QITL, YIRN…LTTL, INYL…LFYS, VLGQ…SYII, LFNS…HYFL, MILG…IGYN, FLEK…FIAV, SFTY…LLGV, MLLN…HPII, and TIVF…GMML.

This sequence belongs to the acyltransferase 3 family.

The protein resides in the cell membrane. Functionally, presumably involved in the export of the biofilm adhesin polysaccharide poly-beta-1,6-N-acetyl-D-glucosamine (PNAG, also referred to as PIA) across the cell membrane. This is Probable poly-beta-1,6-N-acetyl-D-glucosamine export protein (icaC) from Staphylococcus epidermidis.